We begin with the raw amino-acid sequence, 520 residues long: GMP synthase [glutamine-hydrolyzing] (520 aa).

Residues 9 to 202 form the Glutamine amidotransferase type-1 domain; it reads SVLIVDFGSQ…IHNIAGIKGD (194 aa). The Nucleophile role is filled by Cys86. Residues His176 and Glu178 contribute to the active site. Positions 203–395 constitute a GMPS ATP-PPase domain; it reads WSMSAYRQKA…LGLPDSFIGR (193 aa). Residue 230-236 coordinates ATP; sequence SGGVDSS.

As to quaternary structure, homodimer.

The catalysed reaction is XMP + L-glutamine + ATP + H2O = GMP + L-glutamate + AMP + diphosphate + 2 H(+). It functions in the pathway purine metabolism; GMP biosynthesis; GMP from XMP (L-Gln route): step 1/1. In terms of biological role, catalyzes the synthesis of GMP from XMP. The protein is GMP synthase [glutamine-hydrolyzing] of Rhizobium etli (strain CIAT 652).